The sequence spans 734 residues: 1,4-alpha-glucan branching enzyme GlgB (734 aa).

Asp414 acts as the Nucleophile in catalysis. The Proton donor role is filled by Glu467.

It belongs to the glycosyl hydrolase 13 family. GlgB subfamily. Monomer.

It carries out the reaction Transfers a segment of a (1-&gt;4)-alpha-D-glucan chain to a primary hydroxy group in a similar glucan chain.. It participates in glycan biosynthesis; glycogen biosynthesis. Functionally, catalyzes the formation of the alpha-1,6-glucosidic linkages in glycogen by scission of a 1,4-alpha-linked oligosaccharide from growing alpha-1,4-glucan chains and the subsequent attachment of the oligosaccharide to the alpha-1,6 position. In Myxococcus xanthus (strain DK1622), this protein is 1,4-alpha-glucan branching enzyme GlgB.